A 194-amino-acid chain; its full sequence is Ribosomal RNA large subunit methyltransferase E (194 aa).

Residues glycine 48, tryptophan 50, aspartate 66, asparagine 82, and aspartate 110 each contribute to the S-adenosyl-L-methionine site. Lysine 150 acts as the Proton acceptor in catalysis.

This sequence belongs to the class I-like SAM-binding methyltransferase superfamily. RNA methyltransferase RlmE family.

It is found in the cytoplasm. The enzyme catalyses uridine(2552) in 23S rRNA + S-adenosyl-L-methionine = 2'-O-methyluridine(2552) in 23S rRNA + S-adenosyl-L-homocysteine + H(+). In terms of biological role, specifically methylates the uridine in position 2552 of 23S rRNA at the 2'-O position of the ribose in the fully assembled 50S ribosomal subunit. This Picrophilus torridus (strain ATCC 700027 / DSM 9790 / JCM 10055 / NBRC 100828 / KAW 2/3) protein is Ribosomal RNA large subunit methyltransferase E.